The chain runs to 130 residues: Small ribosomal subunit protein uS8 (130 aa).

It belongs to the universal ribosomal protein uS8 family. Part of the 30S ribosomal subunit.

One of the primary rRNA binding proteins, it binds directly to 16S rRNA central domain where it helps coordinate assembly of the platform of the 30S subunit. The polypeptide is Small ribosomal subunit protein uS8 (Pyrococcus abyssi (strain GE5 / Orsay)).